An 88-amino-acid polypeptide reads, in one-letter code: Putative membrane protein insertion efficiency factor (88 aa).

The segment at 67-88 (LNAGGYDPVPPKSDNHSKENKK) is disordered. A compositionally biased stretch (basic and acidic residues) spans 79–88 (SDNHSKENKK).

The protein belongs to the UPF0161 family.

The protein resides in the cell inner membrane. Could be involved in insertion of integral membrane proteins into the membrane. In Actinobacillus succinogenes (strain ATCC 55618 / DSM 22257 / CCUG 43843 / 130Z), this protein is Putative membrane protein insertion efficiency factor.